The following is a 325-amino-acid chain: Serpentine receptor class gamma-16 (325 aa).

The next 7 helical transmembrane spans lie at 25–45, 65–85, 87–107, 144–164, 187–207, 232–252, and 264–284; these read FCLY…ILLI, VVSL…MFIP, LCPL…MYYW, LAVT…WNLL, WASL…FTII, FVSL…LIFV, and LLFQ…IIML.

It belongs to the nematode receptor-like protein srg family.

It localises to the membrane. The polypeptide is Serpentine receptor class gamma-16 (srg-16) (Caenorhabditis elegans).